Consider the following 860-residue polypeptide: MQEQYRPEEIESKVQLHWDEKRTFEVTEDESKEKYYCLSMLPYPSGRLHMGHVRNYTIGDVIARYQRMLGKNVLQPIGWDAFGLPAEGAAVKNNTAPAPWTYDNIAYMKNQLKMLGFGYDWSRELATCTPEYYRWEQKFFTELYKKGLVYKKTSAVNWCPNDQTVLANEQVIDGCCWRCDTKVERKEIPQWFIKITAYADELLNDLDKLDHWPDTVKTMQRNWIGRSEGVEITFNVNDYDNTLTVYTTRPDTFMGCTYLAVAAGHPLAQKAAENNPELAAFIDECRNTKVAEAEMATMEKKGVDTGFKAVHPLTGEEIPVWAANFVLMEYGTGAVMAVPGHDQRDYEFASKYGLNIKPVILAADGSEPDLSQQALTEKGVLFNSGEFNGLDHEAAFNAIADKLTAMGVGERKVNYRLRDWGVSRQRYWGAPIPMVTLEDGTVMPTPDDQLPVILPEDVVMDGITSPIKADPEWAKTTVNGMPALRETDTFDTFMESSWYYARYTCPEYKEGMLDSEAANYWLPVDIYIGGIEHAIMHLLYFRFFHKLMRDAGMVNSDEPAKQLLCQGMVLADAFYYVGENGERNWVSPVDAIVERDEKGRIVKAKDAAGHELVYTGMSKMSKSKNNGIDPQVMVERYGADTVRLFMMFASPADMTLEWQESGVEGANRFLKRVWKLVYEHTAKGDVAALNVDALTEDQKALRRDVHKTIAKVTDDIGRRQTFNTAIAAIMELMNKLAKAPTDGEQDRALMQEALLAVVRMLNPFTPHICFTLWQELKGEGDIDNAPWPVADEKAMVEDSTLVVVQVNGKVRAKITVPVDATEEQVRERAGQEHLVAKYLDGVTVRKVIYVPGKLLNLVVG.

Positions 42–52 match the 'HIGH' region motif; sequence PYPSGRLHMGH. Positions 619-623 match the 'KMSKS' region motif; it reads KMSKS. Position 622 (lysine 622) interacts with ATP.

Belongs to the class-I aminoacyl-tRNA synthetase family.

It is found in the cytoplasm. It carries out the reaction tRNA(Leu) + L-leucine + ATP = L-leucyl-tRNA(Leu) + AMP + diphosphate. This is Leucine--tRNA ligase from Escherichia coli (strain 55989 / EAEC).